We begin with the raw amino-acid sequence, 388 residues long: 4-hydroxy-3-methylbut-2-en-1-yl diphosphate synthase (flavodoxin) (388 aa).

Positions 281, 284, 316, and 323 each coordinate [4Fe-4S] cluster.

Belongs to the IspG family. Requires [4Fe-4S] cluster as cofactor.

The catalysed reaction is (2E)-4-hydroxy-3-methylbut-2-enyl diphosphate + oxidized [flavodoxin] + H2O + 2 H(+) = 2-C-methyl-D-erythritol 2,4-cyclic diphosphate + reduced [flavodoxin]. The protein operates within isoprenoid biosynthesis; isopentenyl diphosphate biosynthesis via DXP pathway; isopentenyl diphosphate from 1-deoxy-D-xylulose 5-phosphate: step 5/6. In terms of biological role, converts 2C-methyl-D-erythritol 2,4-cyclodiphosphate (ME-2,4cPP) into 1-hydroxy-2-methyl-2-(E)-butenyl 4-diphosphate. The protein is 4-hydroxy-3-methylbut-2-en-1-yl diphosphate synthase (flavodoxin) of Pseudarthrobacter chlorophenolicus (strain ATCC 700700 / DSM 12829 / CIP 107037 / JCM 12360 / KCTC 9906 / NCIMB 13794 / A6) (Arthrobacter chlorophenolicus).